Consider the following 517-residue polypeptide: Anthranilate--CoA ligase (517 aa).

An AMP-binding site is contributed by 161 to 172 (LQYTSGSTGAPK).

Belongs to the ATP-dependent AMP-binding enzyme family. Monomer.

It catalyses the reaction anthranilate + ATP + CoA = anthraniloyl-CoA + AMP + diphosphate. Catalyzes the formation of anthraniloyl-CoA, which is the priming step for entry into the Pseudomonas quinolone signal (PQS) biosynthetic pathway. Also active on a variety of aromatic substrates, including benzoate and chloro and fluoro derivatives of anthranilate. The chain is Anthranilate--CoA ligase (pqsA) from Pseudomonas aeruginosa (strain ATCC 15692 / DSM 22644 / CIP 104116 / JCM 14847 / LMG 12228 / 1C / PRS 101 / PAO1).